The primary structure comprises 256 residues: Enolase-phosphatase E1 (256 aa).

D13 and E15 together coordinate Mg(2+). Residues 127–128 (SS) and K175 each bind substrate. A Mg(2+)-binding site is contributed by D202.

Belongs to the HAD-like hydrolase superfamily. MasA/MtnC family. Monomer. Mg(2+) serves as cofactor.

The protein resides in the cytoplasm. The protein localises to the nucleus. It carries out the reaction 5-methylsulfanyl-2,3-dioxopentyl phosphate + H2O = 1,2-dihydroxy-5-(methylsulfanyl)pent-1-en-3-one + phosphate. Its pathway is amino-acid biosynthesis; L-methionine biosynthesis via salvage pathway; L-methionine from S-methyl-5-thio-alpha-D-ribose 1-phosphate: step 3/6. The protein operates within amino-acid biosynthesis; L-methionine biosynthesis via salvage pathway; L-methionine from S-methyl-5-thio-alpha-D-ribose 1-phosphate: step 4/6. Its function is as follows. Bifunctional enzyme that catalyzes the enolization of 2,3-diketo-5-methylthiopentyl-1-phosphate (DK-MTP-1-P) into the intermediate 2-hydroxy-3-keto-5-methylthiopentenyl-1-phosphate (HK-MTPenyl-1-P), which is then dephosphorylated to form the acireductone 1,2-dihydroxy-3-keto-5-methylthiopentene (DHK-MTPene). In Botryotinia fuckeliana (strain B05.10) (Noble rot fungus), this protein is Enolase-phosphatase E1 (utr4).